The chain runs to 159 residues: NADH-quinone oxidoreductase subunit B (159 aa).

The [4Fe-4S] cluster site is built by cysteine 32, cysteine 33, cysteine 97, and cysteine 126.

The protein belongs to the complex I 20 kDa subunit family. As to quaternary structure, NDH-1 is composed of 14 different subunits. Subunits NuoB, C, D, E, F, and G constitute the peripheral sector of the complex. [4Fe-4S] cluster is required as a cofactor.

It is found in the cell inner membrane. It catalyses the reaction a quinone + NADH + 5 H(+)(in) = a quinol + NAD(+) + 4 H(+)(out). Functionally, NDH-1 shuttles electrons from NADH, via FMN and iron-sulfur (Fe-S) centers, to quinones in the respiratory chain. The immediate electron acceptor for the enzyme in this species is believed to be ubiquinone. Couples the redox reaction to proton translocation (for every two electrons transferred, four hydrogen ions are translocated across the cytoplasmic membrane), and thus conserves the redox energy in a proton gradient. This is NADH-quinone oxidoreductase subunit B from Helicobacter pylori (strain J99 / ATCC 700824) (Campylobacter pylori J99).